The chain runs to 281 residues: Bifunctional protein FolD (281 aa).

NADP(+) is bound by residues 159–161 (NRS), Ser-184, and Ile-225.

It belongs to the tetrahydrofolate dehydrogenase/cyclohydrolase family. In terms of assembly, homodimer.

The enzyme catalyses (6R)-5,10-methylene-5,6,7,8-tetrahydrofolate + NADP(+) = (6R)-5,10-methenyltetrahydrofolate + NADPH. The catalysed reaction is (6R)-5,10-methenyltetrahydrofolate + H2O = (6R)-10-formyltetrahydrofolate + H(+). The protein operates within one-carbon metabolism; tetrahydrofolate interconversion. Catalyzes the oxidation of 5,10-methylenetetrahydrofolate to 5,10-methenyltetrahydrofolate and then the hydrolysis of 5,10-methenyltetrahydrofolate to 10-formyltetrahydrofolate. This chain is Bifunctional protein FolD, found in Thermoplasma volcanium (strain ATCC 51530 / DSM 4299 / JCM 9571 / NBRC 15438 / GSS1).